The chain runs to 295 residues: ATP synthase gamma chain (295 aa).

It belongs to the ATPase gamma chain family. F-type ATPases have 2 components, CF(1) - the catalytic core - and CF(0) - the membrane proton channel. CF(1) has five subunits: alpha(3), beta(3), gamma(1), delta(1), epsilon(1). CF(0) has three main subunits: a, b and c.

It is found in the cell inner membrane. Functionally, produces ATP from ADP in the presence of a proton gradient across the membrane. The gamma chain is believed to be important in regulating ATPase activity and the flow of protons through the CF(0) complex. This Chlorobium phaeobacteroides (strain BS1) protein is ATP synthase gamma chain.